We begin with the raw amino-acid sequence, 1795 residues long: Protein TIC 214 (1795 aa).

A run of 6 helical transmembrane segments spans residues 19-39 (IINS…FSIG), 68-88 (FIAG…HLAL), 91-111 (PHTI…WNNH), 133-153 (VFLN…SSML), 176-196 (VGWL…LVWI), and 227-247 (IFSI…PSPI). The tract at residues 1490-1517 (EKESTGQVEFESDKEQQRNSESALSNQE) is disordered. Polar residues predominate over residues 1508–1517 (NSESALSNQE).

This sequence belongs to the TIC214 family. In terms of assembly, part of the Tic complex.

The protein localises to the plastid. The protein resides in the chloroplast inner membrane. In terms of biological role, involved in protein precursor import into chloroplasts. May be part of an intermediate translocation complex acting as a protein-conducting channel at the inner envelope. The sequence is that of Protein TIC 214 from Crucihimalaya wallichii (Rock-cress).